The following is a 471-amino-acid chain: Collagenase 3 (471 aa).

Positions 1-19 (MHPGVLAAFLFLSWTHCRA) are cleaved as a signal peptide. Positions 20-103 (LPLPSGGDED…PRCGVPDVGE (84 aa)) are cleaved as a propeptide — activation peptide. A Cysteine switch motif is present at residues 94 to 101 (PRCGVPDV). Cys-96 lines the Zn(2+) pocket. Asn-117 carries N-linked (GlcNAc...) asparagine glycosylation. Asp-128 lines the Ca(2+) pocket. Asn-152 carries N-linked (GlcNAc...) asparagine glycosylation. Asp-162 contacts Ca(2+). 2 residues coordinate Zn(2+): His-172 and Asp-174. An interaction with TIMP2 region spans residues 176 to 246 (YPFDGPSGLL…GALMFPIYTY (71 aa)). Ca(2+)-binding residues include Asp-179, Gly-180, Ser-182, and Leu-184. His-187 lines the Zn(2+) pocket. Ca(2+) contacts are provided by Asn-194, Gly-196, and Asp-198. His-200 contributes to the Zn(2+) binding site. 3 residues coordinate Ca(2+): Asp-202, Asp-203, and Glu-205. His-222 contributes to the Zn(2+) binding site. The active site involves Glu-223. Positions 226, 232, and 240 each coordinate Zn(2+). The interval 263–284 (QSLYGPGDEDPNPKHPKTPDKC) is disordered. The interval 268–471 (PGDEDPNPKH…VMPANSILWC (204 aa)) is interaction with collagen. Positions 273 to 284 (PNPKHPKTPDKC) are enriched in basic and acidic residues. Hemopexin repeat units lie at residues 281–330 (PDKC…WPEL), 331–377 (PNRI…GLPK), 379–427 (VKKI…FPGI), and 428–471 (GDKV…ILWC). Cysteines 284 and 471 form a disulfide. Residues Asp-291, Ile-293, Asp-335, and Ala-337 each contribute to the Ca(2+) site. A Phosphotyrosine; by PKDCC modification is found at Tyr-366. Ca(2+) is bound by residues Ser-383, Ala-385, Asp-432, and Val-434.

This sequence belongs to the peptidase M10A family. As to quaternary structure, monomer. Interacts with TIMP1, TIMP2 and TIMP3. Binds (via the C-terminal region) to collagen. The cofactor is Ca(2+). Zn(2+) is required as a cofactor. The proenzyme is activated by removal of the propeptide; this cleavage can be effected by other matrix metalloproteinases, such as MMP2, MMP3 and MMP14 and may involve several cleavage steps. Cleavage can also be autocatalytic, after partial maturation by another protease or after treatment with 4-aminophenylmercuric acetate (APMA) (in vitro). Post-translationally, N-glycosylated. In terms of processing, tyrosine phosphorylated by PKDCC/VLK. In terms of tissue distribution, detected in fetal cartilage and calvaria, in chondrocytes of hypertrophic cartilage in vertebrae and in the dorsal end of ribs undergoing ossification, as well as in osteoblasts and periosteal cells below the inner periosteal region of ossified ribs. Detected in chondrocytes from in joint cartilage that have been treated with TNF and IL1B, but not in untreated chondrocytes. Detected in T lymphocytes. Detected in breast carcinoma tissue.

It is found in the secreted. The protein resides in the extracellular space. It localises to the extracellular matrix. With respect to regulation, inhibited by TIMP1, TIMP2 and TIMP3. Inhibited by acetohydroxamic acid and other zinc chelators. In terms of biological role, plays a role in the degradation of extracellular matrix proteins including fibrillar collagen, fibronectin, TNC and ACAN. Cleaves triple helical collagens, including type I, type II and type III collagen, but has the highest activity with soluble type II collagen. Can also degrade collagen type IV, type XIV and type X. May also function by activating or degrading key regulatory proteins, such as TGFB1 and CCN2. Plays a role in wound healing, tissue remodeling, cartilage degradation, bone development, bone mineralization and ossification. Required for normal embryonic bone development and ossification. Plays a role in the healing of bone fractures via endochondral ossification. Plays a role in wound healing, probably by a mechanism that involves proteolytic activation of TGFB1 and degradation of CCN2. Plays a role in keratinocyte migration during wound healing. May play a role in cell migration and in tumor cell invasion. In Homo sapiens (Human), this protein is Collagenase 3 (MMP13).